The chain runs to 597 residues: Aspartate--tRNA(Asp/Asn) ligase (597 aa).

Glu-175 lines the L-aspartate pocket. The aspartate stretch occupies residues 199 to 202 (QQYK). The L-aspartate site is built by Arg-221 and His-454. Position 221–223 (221–223 (RDE)) interacts with ATP. Glu-488 is a binding site for ATP. Arg-495 serves as a coordination point for L-aspartate. Residue 540–543 (GIDR) coordinates ATP.

The protein belongs to the class-II aminoacyl-tRNA synthetase family. Type 1 subfamily. In terms of assembly, homodimer.

The protein resides in the cytoplasm. The catalysed reaction is tRNA(Asx) + L-aspartate + ATP = L-aspartyl-tRNA(Asx) + AMP + diphosphate. Functionally, aspartyl-tRNA synthetase with relaxed tRNA specificity since it is able to aspartylate not only its cognate tRNA(Asp) but also tRNA(Asn). Reaction proceeds in two steps: L-aspartate is first activated by ATP to form Asp-AMP and then transferred to the acceptor end of tRNA(Asp/Asn). This Bartonella tribocorum (strain CIP 105476 / IBS 506) protein is Aspartate--tRNA(Asp/Asn) ligase.